The primary structure comprises 566 residues: Osteoclast stimulatory transmembrane protein (566 aa).

Residues 1–51 (MPGHPGAAEQLVKTGWRSWHLGFWKALAPLQAAWDAFSQPVPASCGQLLTQ) are Cytoplasmic-facing. The helical transmembrane segment at 52–72 (LLLCASLAAAAAGLVYHWLAS) threads the bilayer. The Extracellular portion of the chain corresponds to 73-81 (LLLYPPGPS). A helical transmembrane segment spans residues 82-102 (AMVATVCGLLVFLSLGLVPPV). Topologically, residues 103–128 (RCLFALSVPTLGMEQGRRLLLSYSTA) are cytoplasmic. Residues 129–149 (TLAIAVVPNVLANVGAAGQVL) traverse the membrane as a helical segment. Residues 150–227 (RCVTEGSLES…ARAAALGTQR (78 aa)) lie on the Extracellular side of the membrane. The helical transmembrane segment at 228–248 (VVTGLFMLGLLVESAWYLHCY) threads the bilayer. Residues 249–304 (LTDLRFDNIYATQQLTQRLAQAQATHLLAPPPTWLLQAAQLRLSQEELLSCLLRLG) lie on the Cytoplasmic side of the membrane. A helical transmembrane segment spans residues 305 to 325 (LLALLLVATAVAVATDHVAFL). Residues 326-398 (LAQATVDWAQ…CPLLPARRPR (73 aa)) are Extracellular-facing. A helical transmembrane segment spans residues 399-419 (AAAPLAAGALQLLAGSTVLLE). Residues 420 to 566 (AYARRLRHAI…EGNTGHDRPG (147 aa)) lie on the Cytoplasmic side of the membrane.

The protein resides in the membrane. Its function is as follows. Probable cell surface receptor that plays a role in cellular fusion and cell differentiation. Cooperates with DCSTAMP in modulating cell-cell fusion in both osteoclasts and foreign body giant cells (FBGCs). Involved in osteoclast bone resorption. Promotes osteoclast differentiation and may play a role in the multinucleated osteoclast maturation. This chain is Osteoclast stimulatory transmembrane protein (OCSTAMP), found in Homo sapiens (Human).